The primary structure comprises 214 residues: Redox-sensing transcriptional repressor Rex (214 aa).

A DNA-binding region (H-T-H motif) is located at residues 17–56 (LYYRIFKRFHADQVEKASSKQIADAMGIDSATVRRDFSYF). 91 to 96 (GCGNIG) is a binding site for NAD(+).

It belongs to the transcriptional regulatory Rex family. As to quaternary structure, homodimer.

The protein resides in the cytoplasm. In terms of biological role, modulates transcription in response to changes in cellular NADH/NAD(+) redox state. The chain is Redox-sensing transcriptional repressor Rex from Streptococcus pyogenes serotype M12 (strain MGAS9429).